A 279-amino-acid chain; its full sequence is Coiled-coil domain-containing protein 106 (279 aa).

Positions 62-101 (KAQLHMALERNSWLQKRIEDLEEERDFLRCQLDKFISSAR) form a coiled coil. Residues 109–121 (RMKPGPRRVDGDS) are compositionally biased toward basic and acidic residues. The interval 109 to 173 (RMKPGPRRVD…FGKTKARERQ (65 aa)) is disordered. S129 is modified (phosphoserine). A Bipartite nuclear localization signal motif is present at residues 151–164 (KRQKQKGSTSRKRF). The segment covering 151 to 167 (KRQKQKGSTSRKRFGKT) has biased composition (basic residues).

In terms of assembly, interacts with p53/TP53.

Its subcellular location is the nucleus. In terms of biological role, promotes the degradation of p53/TP53 protein and inhibits its transactivity. The chain is Coiled-coil domain-containing protein 106 (Ccdc106) from Mus musculus (Mouse).